Reading from the N-terminus, the 730-residue chain is S-adenosyl-L-methionine-dependent tRNA 4-demethylwyosine synthase TYW1 (730 aa).

The 159-residue stretch at 79–237 (VKVFYGSQTG…DFQVWKGKFL (159 aa)) folds into the Flavodoxin-like domain. FMN-binding positions include 85 to 89 (SQTGT) and 176 to 208 (VFGL…ARIM). The disordered stretch occupies residues 253–351 (GNCKKASCKN…RKSECEEERR (99 aa)). Residues 267–282 (KEEAEDNHSLAEKNNS) show a composition bias toward basic and acidic residues. Positions 283-297 (EEELMESSSDEESSS) are enriched in acidic residues. The span at 333-351 (SQRVKQNGERKSECEEERR) shows a compositional bias: basic and acidic residues. In terms of domain architecture, Radical SAM core spans 398 to 642 (YGIESHRCME…ANLLPDYEIA (245 aa)). Cysteine 414, cysteine 418, and cysteine 421 together coordinate [4Fe-4S] cluster.

Belongs to the TYW1 family. [4Fe-4S] cluster serves as cofactor.

The catalysed reaction is N(1)-methylguanosine(37) in tRNA(Phe) + pyruvate + S-adenosyl-L-methionine = 4-demethylwyosine(37) in tRNA(Phe) + 5'-deoxyadenosine + L-methionine + CO2 + H2O. The protein operates within tRNA modification; wybutosine-tRNA(Phe) biosynthesis. Probable component of the wybutosine biosynthesis pathway. Wybutosine is a hyper modified guanosine with a tricyclic base found at the 3'-position adjacent to the anticodon of eukaryotic phenylalanine tRNA. Catalyzes the condensation of N-methylguanine with 2 carbon atoms from pyruvate to form the tricyclic 4-demethylwyosine, an intermediate in wybutosine biosynthesis. This Danio rerio (Zebrafish) protein is S-adenosyl-L-methionine-dependent tRNA 4-demethylwyosine synthase TYW1 (tyw1).